Consider the following 452-residue polypeptide: uncharacterized protein (452 aa).

The protein localises to the cytoplasm. It localises to the nucleus. This is an uncharacterized protein from Schizosaccharomyces pombe (strain 972 / ATCC 24843) (Fission yeast).